Reading from the N-terminus, the 275-residue chain is Voltage-dependent calcium channel gamma-5 subunit (275 aa).

A run of 4 helical transmembrane segments spans residues 8 to 28 (ALTL…GIAV), 103 to 123 (FPLV…IGHI), 129 to 149 (ILAF…VVGL), and 181 to 201 (FAAI…YLFM).

The protein belongs to the PMP-22/EMP/MP20 family. CACNG subfamily. The L-type calcium channel is composed of five subunits: alpha-1, alpha-2/delta, beta and gamma. Acts as an auxiliary subunit for AMPA-selective glutamate receptors (AMPARs). Found in a complex with GRIA1, GRIA2, GRIA3, GRIA4, CNIH2, CNIH3, CACNG2, CACNG3, CACNG4, CACNG7 and CACNG8. Interacts with GRIA1, GRIA2, GRIA3 and GRIA4.

The protein resides in the membrane. It localises to the postsynaptic density membrane. In terms of biological role, regulates the gating properties of AMPA-selective glutamate receptors (AMPARs). Modulates their gating properties by accelerating their rates of activation, deactivation and desensitization. Displays subunit-specific AMPA receptor regulation. Shows specificity for GRIA1, GRIA4 and the long isoform of GRIA2. According to PubMed:18817736, shows only specificity for GRIA2 and specifically to the form of GRIA2 for which a single amino acid in the pore region has been edited from a glutamine to an arginine residue. Thought to stabilize the calcium channel in an inactivated (closed) state. This Rattus norvegicus (Rat) protein is Voltage-dependent calcium channel gamma-5 subunit (Cacng5).